Here is a 652-residue protein sequence, read N- to C-terminus: tRNA 5-methylaminomethyl-2-thiouridine biosynthesis bifunctional protein MnmC (652 aa).

The interval 1–235 (MPDRLVPATL…EPALRVGEYA (235 aa)) is tRNA (mnm(5)s(2)U34)-methyltransferase. The FAD-dependent cmnm(5)s(2)U34 oxidoreductase stretch occupies residues 259-652 (IGAGLAGCAV…IRALRGRQIG (394 aa)).

In the N-terminal section; belongs to the methyltransferase superfamily. tRNA (mnm(5)s(2)U34)-methyltransferase family. This sequence in the C-terminal section; belongs to the DAO family. It depends on FAD as a cofactor.

It is found in the cytoplasm. The enzyme catalyses 5-aminomethyl-2-thiouridine(34) in tRNA + S-adenosyl-L-methionine = 5-methylaminomethyl-2-thiouridine(34) in tRNA + S-adenosyl-L-homocysteine + H(+). Its function is as follows. Catalyzes the last two steps in the biosynthesis of 5-methylaminomethyl-2-thiouridine (mnm(5)s(2)U) at the wobble position (U34) in tRNA. Catalyzes the FAD-dependent demodification of cmnm(5)s(2)U34 to nm(5)s(2)U34, followed by the transfer of a methyl group from S-adenosyl-L-methionine to nm(5)s(2)U34, to form mnm(5)s(2)U34. This Burkholderia ambifaria (strain ATCC BAA-244 / DSM 16087 / CCUG 44356 / LMG 19182 / AMMD) (Burkholderia cepacia (strain AMMD)) protein is tRNA 5-methylaminomethyl-2-thiouridine biosynthesis bifunctional protein MnmC.